The sequence spans 220 residues: Cytidylate kinase (220 aa).

10–18 (GPASSGKST) contributes to the ATP binding site.

Belongs to the cytidylate kinase family. Type 1 subfamily.

It is found in the cytoplasm. It carries out the reaction CMP + ATP = CDP + ADP. It catalyses the reaction dCMP + ATP = dCDP + ADP. This is Cytidylate kinase from Lactococcus lactis subsp. lactis (strain IL1403) (Streptococcus lactis).